A 410-amino-acid polypeptide reads, in one-letter code: MAVKTLQDLLNEGVEGRGVLVRSDLNVPLDDNGQITDPGRIIASIPTLKALVEAGAKVVVTAHLGRPKGEPDPKFSLAPVAAKLAELLGRNVQLAGDVVGYDALSRSEGLTDGDVLLLENVRFDPRETSKDEAERGKLAAALVELVGEDGAFVSDGFGVVHRKQASVYDVAKLLPHYAGTLVAAEVDVLAKLTDNTERPYAVVLGGSKVSDKLAVIEALAPKVDTLVIGGGMCFTFLAAQGLSVGSSLLQEEMIDTCKGLLERYADVIHLPRDVVVADSFSADAESKCVPANEIPDGWMGLDIGAESVDRFAALLTEAKTVFWNGPMGVFEFEKFAAGTRGVAEAIVAATGKGAFTVVGGGDSAAAVRALGLPEDGFSHISTGGGASLEYLEGKELPGISVLEDTAPEGS.

Substrate-binding positions include 24–26 (DLN), Arg40, 63–66 (HLGR), Arg122, and Arg162. ATP-binding positions include Lys212, Gly300, Glu331, and 360 to 363 (GGDS).

It belongs to the phosphoglycerate kinase family. As to quaternary structure, monomer.

The protein resides in the cytoplasm. It carries out the reaction (2R)-3-phosphoglycerate + ATP = (2R)-3-phospho-glyceroyl phosphate + ADP. The protein operates within carbohydrate degradation; glycolysis; pyruvate from D-glyceraldehyde 3-phosphate: step 2/5. The sequence is that of Phosphoglycerate kinase from Nocardia farcinica (strain IFM 10152).